We begin with the raw amino-acid sequence, 708 residues long: Protein SUPPRESSOR OF MAX2 1A (708 aa).

The tract at residues 248-283 (QMASKPQEKAASPPGSPVRTDLVLGPKQTETTPEKT) is disordered. The short motif at 537–541 (FDLNE) is the EAR element.

The protein belongs to the ClpA/ClpB family.

Functionally, probable component of a transcriptional corepressor complex that acts downstream of MAX2 to negatively regulate karrikins/strigolactone responses. Involved in the (-)-germacrene D signaling pathway influencing plant fitness and occurring in the stigma in a KAI2IA-dependent manner. This is Protein SUPPRESSOR OF MAX2 1A from Petunia hybrida (Petunia).